We begin with the raw amino-acid sequence, 111 residues long: MATLIAARTKRKAPRVRIFEVRERGHTYVTKNVTVEDGACVYLRNVIPNGETKALNNPCVLSTCYAADRKVNSTLCPNIGVDEGCHVEWTPDGVYPNCCPKHVCPSATASS.

Residues 1 to 19 (MATLIAARTKRKAPRVRIF) form the signal peptide. Intrachain disulfides connect Cys-40/Cys-64, Cys-59/Cys-98, Cys-76/Cys-99, and Cys-85/Cys-104.

The protein belongs to the CirpT family. In terms of tissue distribution, expressed in salivary glands.

It localises to the secreted. In terms of biological role, complement inhibitor. Prevents complement-mediated activation of C5 by sterically preventing direct binding of C5 to its convertase (binding with domains MG4 and MG5). Binds C5 at a different binding site than the other tick complement inhibitors OmCI and RaCI3, and the drug eculizumab. Inhibits the complement in human, rat and guinea pig, and also shows a reduced inhibition in rabbit and pig. This chain is Complement inhibitor CirpT1, found in Rhipicephalus pulchellus (Yellow backed tick).